Reading from the N-terminus, the 364-residue chain is CCA-adding enzyme (364 aa).

Gly19 and Arg22 together coordinate ATP. CTP-binding residues include Gly19 and Arg22. 2 residues coordinate Mg(2+): Asp32 and Asp34. ATP contacts are provided by Arg102, Arg148, and Arg151. Positions 102, 148, and 151 each coordinate CTP.

It belongs to the tRNA nucleotidyltransferase/poly(A) polymerase family. Bacterial CCA-adding enzyme type 2 subfamily. Mg(2+) is required as a cofactor.

It catalyses the reaction a tRNA precursor + 2 CTP + ATP = a tRNA with a 3' CCA end + 3 diphosphate. The catalysed reaction is a tRNA with a 3' CCA end + 2 CTP + ATP = a tRNA with a 3' CCACCA end + 3 diphosphate. Functionally, catalyzes the addition and repair of the essential 3'-terminal CCA sequence in tRNAs without using a nucleic acid template. Adds these three nucleotides in the order of C, C, and A to the tRNA nucleotide-73, using CTP and ATP as substrates and producing inorganic pyrophosphate. tRNA 3'-terminal CCA addition is required both for tRNA processing and repair. Also involved in tRNA surveillance by mediating tandem CCA addition to generate a CCACCA at the 3' terminus of unstable tRNAs. While stable tRNAs receive only 3'-terminal CCA, unstable tRNAs are marked with CCACCA and rapidly degraded. The polypeptide is CCA-adding enzyme (Bordetella pertussis (strain Tohama I / ATCC BAA-589 / NCTC 13251)).